Reading from the N-terminus, the 949-residue chain is Coiled-coil domain-containing protein 66 (949 aa).

T115 and T121 each carry phosphothreonine. S369 is subject to Phosphoserine. A coiled-coil region spans residues Q474–K558. The interval G570–F949 is mediates localization to cilia, centrosomes and spindle microtubules and the interaction with PCM1, CEP290, CEP104 and CSPP1. S606 carries the phosphoserine modification. Disordered stretches follow at residues Q691–I714 and S789–Q809.

As to quaternary structure, homodimer; disulfide-linked. Interacts with CEP290. Interacts with PCM1. Interacts with ARMC9, TOGARAM1, CSPP1 and CEP104. Interacts with CDK5RAP2, CEP152, CEP192, TBG1 and PRC1.

It is found in the cytoplasm. The protein localises to the cytoskeleton. Its subcellular location is the microtubule organizing center. It localises to the centrosome. The protein resides in the centriolar satellite. It is found in the cell projection. The protein localises to the cilium. Its subcellular location is the cilium basal body. It localises to the cilium axoneme. The protein resides in the photoreceptor inner segment. It is found in the photoreceptor outer segment. In terms of biological role, microtubule-binding protein required for ciliogenesis. May function in ciliogenesis by mediating the transport of proteins like BBS4 to the cilium, but also through the organization of the centriolar satellites. Required for the assembly of signaling-competent cilia with proper structure and length. Mediates this function in part by regulating transition zone assembly and basal body recruitment of the IFT-B complex. Cooperates with the ciliopathy proteins CSPP1 and CEP104 during cilium length regulation. Plays two important roles during cell division. First, is required for mitotic progression via regulation of spindle assembly, organization and orientation, levels of spindle microtubules (MTs), kinetochore-fiber integrity, and chromosome alignment. Second, functions during cytokinesis in part by regulating assembly and organization of central spindle and midbody MTs Plays a role in retina morphogenesis and/or homeostasis. This Pongo abelii (Sumatran orangutan) protein is Coiled-coil domain-containing protein 66.